We begin with the raw amino-acid sequence, 667 residues long: Protein angel homolog 1 (667 aa).

Residues Ser77 and Ser105 each carry the phosphoserine modification.

Belongs to the CCR4/nocturin family.

The chain is Protein angel homolog 1 from Rattus norvegicus (Rat).